Consider the following 717-residue polypeptide: Catalase-peroxidase (717 aa).

A disordered region spans residues 1-20; that stretch reads MSGKCPVMHGGNTSTGTSNK. Residues 11–20 are compositionally biased toward polar residues; the sequence is GNTSTGTSNK. The tryptophyl-tyrosyl-methioninium (Trp-Tyr) (with M-245) cross-link spans 91 to 219; the sequence is WHSAGSYRLA…LAAVQMGLIY (129 aa). Catalysis depends on histidine 92, which acts as the Proton acceptor. Residues 219–245 constitute a cross-link (tryptophyl-tyrosyl-methioninium (Tyr-Met) (with W-91)); it reads YVNPEGVNGQPDPQKTAEQVRETFARM. Histidine 260 is a binding site for heme b.

Belongs to the peroxidase family. Peroxidase/catalase subfamily. As to quaternary structure, homodimer or homotetramer. It depends on heme b as a cofactor. Formation of the three residue Trp-Tyr-Met cross-link is important for the catalase, but not the peroxidase activity of the enzyme.

It catalyses the reaction H2O2 + AH2 = A + 2 H2O. It carries out the reaction 2 H2O2 = O2 + 2 H2O. In terms of biological role, bifunctional enzyme with both catalase and broad-spectrum peroxidase activity. The sequence is that of Catalase-peroxidase from Chromohalobacter salexigens (strain ATCC BAA-138 / DSM 3043 / CIP 106854 / NCIMB 13768 / 1H11).